Consider the following 469-residue polypeptide: Protein apterous (469 aa).

Disordered regions lie at residues 21–44 and 111–141; these read GPGA…CGSA and EVSD…DSKI. LIM zinc-binding domains lie at 148–200 and 210–263; these read CSGC…CKND and CSRC…CRTH. Residues 367 to 426 constitute a DNA-binding region (homeobox); it reads TKRMRTSFKHHQLRTMKSYFAINHNPDAKDLKQLSQKTGLPKRVLQVWFQNARAKWRRMM.

In terms of tissue distribution, expressed in PNS and CNS.

It is found in the nucleus. Functionally, required for the normal development of the wing and halter imaginal disks. This chain is Protein apterous (ap), found in Drosophila melanogaster (Fruit fly).